Here is an 80-residue protein sequence, read N- to C-terminus: Small ribosomal subunit protein bS18c (80 aa).

Residues 1–19 (MKKFISRPKRSSRRRKKTP) show a composition bias toward basic residues. The segment at 1–24 (MKKFISRPKRSSRRRKKTPIKPGE) is disordered.

The protein belongs to the bacterial ribosomal protein bS18 family. As to quaternary structure, part of the 30S ribosomal subunit.

It localises to the plastid. The protein localises to the chloroplast. The chain is Small ribosomal subunit protein bS18c from Staurastrum punctulatum (Green alga).